Consider the following 362-residue polypeptide: 3-dehydroquinate synthase (362 aa).

NAD(+)-binding positions include 73-78 (DAEAGK), 107-111 (GAATD), 131-132 (TT), K144, K153, and 171-174 (TLQT). Residues E186, H249, and H265 each contribute to the Zn(2+) site.

The protein belongs to the sugar phosphate cyclases superfamily. Dehydroquinate synthase family. It depends on NAD(+) as a cofactor. Co(2+) is required as a cofactor. Requires Zn(2+) as cofactor.

The protein localises to the cytoplasm. The catalysed reaction is 7-phospho-2-dehydro-3-deoxy-D-arabino-heptonate = 3-dehydroquinate + phosphate. Its pathway is metabolic intermediate biosynthesis; chorismate biosynthesis; chorismate from D-erythrose 4-phosphate and phosphoenolpyruvate: step 2/7. In terms of biological role, catalyzes the conversion of 3-deoxy-D-arabino-heptulosonate 7-phosphate (DAHP) to dehydroquinate (DHQ). This Mycobacterium bovis (strain ATCC BAA-935 / AF2122/97) protein is 3-dehydroquinate synthase.